We begin with the raw amino-acid sequence, 162 residues long: Transcriptional repressor NrdR (162 aa).

A zinc finger lies at 3–34 (CPFCQFEGLKVTDSRDAMEMNAIRRRRECLNC). Positions 48-138 (VQVQKRDGTY…VYKRFKDLGE (91 aa)) constitute an ATP-cone domain.

This sequence belongs to the NrdR family. It depends on Zn(2+) as a cofactor.

Negatively regulates transcription of bacterial ribonucleotide reductase nrd genes and operons by binding to NrdR-boxes. This Protochlamydia amoebophila (strain UWE25) protein is Transcriptional repressor NrdR.